Consider the following 262-residue polypeptide: 5-methyltetrahydrofolate:corrinoid/iron-sulfur protein co-methyltransferase (262 aa).

One can recognise a Pterin-binding domain in the interval 1-246 (MLIIGERING…ETAATAEILL (246 aa)). (6S)-5-methyl-5,6,7,8-tetrahydrofolate-binding residues include Asn96 and Asp160. Residue Lys184 participates in Ca(2+) binding. 3 residues coordinate (6S)-5-methyl-5,6,7,8-tetrahydrofolate: Asn199, Gln202, and Arg207. Position 202-203 (202-203 (QN)) interacts with methylcob(III)alamin. Gly222 and Asp224 together coordinate Ca(2+).

This sequence belongs to the vitamin-B12 dependent methionine synthase family. As to quaternary structure, heterohexamer composed of 2 subunits of AcsC, 2 subunits of AcsD and 2 subunits of AcsE. Requires Ca(2+) as cofactor.

The enzyme catalyses methyl-Co(III)-[corrinoid Fe-S protein] + (6S)-5,6,7,8-tetrahydrofolate = Co(I)-[corrinoid Fe-S protein] + (6S)-5-methyl-5,6,7,8-tetrahydrofolate + H(+). Its function is as follows. Methyltransferase that mediates the transfer of a N5-methyl group of (6S)-methyltetrahydrofolate to the 5-methoxybenzimidazolylcobamide cofactor of a corrinoid/Fe-S protein (AcsC/AcsD) in the anaerobic acetyl-CoA pathway (Wood-Ljungdahl pathway) of carbon monoxide and carbon dioxide fixation. In Moorella thermoacetica (Clostridium thermoaceticum), this protein is 5-methyltetrahydrofolate:corrinoid/iron-sulfur protein co-methyltransferase (acsE).